The sequence spans 419 residues: 3-isopropylmalate dehydratase large subunit (419 aa).

[4Fe-4S] cluster is bound by residues cysteine 300, cysteine 360, and cysteine 363.

The protein belongs to the aconitase/IPM isomerase family. LeuC type 2 subfamily. As to quaternary structure, heterodimer of LeuC and LeuD. Requires [4Fe-4S] cluster as cofactor.

The catalysed reaction is (2R,3S)-3-isopropylmalate = (2S)-2-isopropylmalate. It participates in amino-acid biosynthesis; L-leucine biosynthesis; L-leucine from 3-methyl-2-oxobutanoate: step 2/4. In terms of biological role, catalyzes the isomerization between 2-isopropylmalate and 3-isopropylmalate, via the formation of 2-isopropylmaleate. The sequence is that of 3-isopropylmalate dehydratase large subunit from Clostridium beijerinckii (strain ATCC 51743 / NCIMB 8052) (Clostridium acetobutylicum).